Consider the following 76-residue polypeptide: Small ribosomal subunit protein bS18 (76 aa).

It belongs to the bacterial ribosomal protein bS18 family. As to quaternary structure, part of the 30S ribosomal subunit. Forms a tight heterodimer with protein bS6.

Its function is as follows. Binds as a heterodimer with protein bS6 to the central domain of the 16S rRNA, where it helps stabilize the platform of the 30S subunit. The chain is Small ribosomal subunit protein bS18 from Mesoplasma florum (strain ATCC 33453 / NBRC 100688 / NCTC 11704 / L1) (Acholeplasma florum).